Consider the following 1205-residue polypeptide: Caskin-2 (1205 aa).

ANK repeat units lie at residues 48-77 (DGFS…SVDI), 81-110 (NGMR…SVNA), 114-143 (DGQI…NPCH), 147-176 (GKKT…CVSL), 188-217 (NFTT…EINK), and 220-249 (KMGT…DVNI). One can recognise an SH3 domain in the interval 281–347 (SGILKVRALK…PPSIVEVISK (67 aa)). Composition is skewed to polar residues over residues 377 to 388 (SPGSQLGINPDT) and 398 to 411 (GSES…SGQS). The tract at residues 377-411 (SPGSQLGINPDTSVAGDRHSVGSESSVRSAGSGQS) is disordered. 2 consecutive SAM domains span residues 468–531 (KDAE…LIVA) and 537–601 (QIPV…LLDL). Low complexity predominate over residues 666–687 (RRSFSQESISSRSQGSGHSQES). Disordered regions lie at residues 666 to 689 (RRSF…ESAS), 784 to 964 (RPGR…QRHL), 984 to 1054 (QIAA…SQEP), and 1132 to 1155 (SEAS…KGPP). Positions 823–840 (SSMSSAEGQSPEGQSSVK) are enriched in polar residues. Over residues 908–919 (ISSQHSSSESIP) the composition is skewed to low complexity. Residues 942 to 959 (DATSELSPTQESQLQSAE) are compositionally biased toward polar residues. Positions 1009–1037 (KNEEHDFNLTESDTVKRRPKVKEKEEESP) are enriched in basic and acidic residues. 2 stretches are compositionally biased toward polar residues: residues 1042 to 1054 (ANNS…SQEP) and 1137 to 1155 (REQT…KGPP).

The polypeptide is Caskin-2 (caskin2) (Xenopus laevis (African clawed frog)).